Here is a 179-residue protein sequence, read N- to C-terminus: MARLQEHYQTVVKKALLEKFQYGNVMEIPRLEKIVINMGVGEASQDRKLIEGALTDMTAISGQKPIITRAKKSIAAFKLREQMIVGCKVTLRRDRMFEFLDRLVTIALPRVRDFRGVSAKSFDGRGNYNMGLKEQIVFPEIDYDRVDKVRGMDITICTSAKSDEEAKALLEGFAMPFMK.

This sequence belongs to the universal ribosomal protein uL5 family. In terms of assembly, part of the 50S ribosomal subunit; part of the 5S rRNA/L5/L18/L25 subcomplex. Contacts the 5S rRNA and the P site tRNA. Forms a bridge to the 30S subunit in the 70S ribosome.

Its function is as follows. This is one of the proteins that bind and probably mediate the attachment of the 5S RNA into the large ribosomal subunit, where it forms part of the central protuberance. In the 70S ribosome it contacts protein S13 of the 30S subunit (bridge B1b), connecting the 2 subunits; this bridge is implicated in subunit movement. Contacts the P site tRNA; the 5S rRNA and some of its associated proteins might help stabilize positioning of ribosome-bound tRNAs. The chain is Large ribosomal subunit protein uL5 from Rhodospirillum rubrum (strain ATCC 11170 / ATH 1.1.1 / DSM 467 / LMG 4362 / NCIMB 8255 / S1).